The sequence spans 315 residues: MIRIGTRGSLLATTQAGGVRDALIARGHPAELVTITTAGDRSSGPIESLGVGVFTTALREAIEEGRVDAAVHSHKDLPTADDPRFAVAAIPARNDPRDAVVARDGLVLAELPPGSLVGTSSPRRAAQLRALGLGLEIRPLRGNLDTRLNRVSSGDLDAIVVARAGLARLGRLGDVTETLEPVQMLPAPAQGALAVECRAGDSRLAAVLAELDDADTRASVTAERALLAELEAGCSAPVGAIAEVVESIDEDGRIFEELSLRGCVAALDGSDVIRASGIGTPGRARELGLSVAAELFELGARELMSGARHDPARGN.

S-(dipyrrolylmethanemethyl)cysteine is present on Cys-234.

Belongs to the HMBS family. As to quaternary structure, monomer. The cofactor is dipyrromethane.

It carries out the reaction 4 porphobilinogen + H2O = hydroxymethylbilane + 4 NH4(+). The protein operates within porphyrin-containing compound metabolism; protoporphyrin-IX biosynthesis; coproporphyrinogen-III from 5-aminolevulinate: step 2/4. Tetrapolymerization of the monopyrrole PBG into the hydroxymethylbilane pre-uroporphyrinogen in several discrete steps. The sequence is that of Porphobilinogen deaminase from Mycolicibacterium paratuberculosis (strain ATCC BAA-968 / K-10) (Mycobacterium paratuberculosis).